Consider the following 755-residue polypeptide: Exocyst complex component 3 (755 aa).

2 coiled-coil regions span residues 34–62 (DQLDKVEQYRRREARKKASVEARLKAAIQ) and 618–649 (RAVMQKRISFRSAEERKEGAEKMVREAEQLRF). The residue at position 38 (K38) is an N6-acetyllysine.

Belongs to the SEC6 family. In terms of assembly, the exocyst complex is composed of EXOC1, EXOC2, EXOC3, EXOC4, EXOC5, EXOC6, EXOC7 and EXOC8. Interacts with EXOC3L1. Interacts with BIRC6/bruce. Interacts with MYRIP. Interacts with SLC6A9. Widely expressed, with highest levels in kidney, followed by brain (at protein level).

The protein resides in the cytoplasm. Its subcellular location is the perinuclear region. It is found in the cell projection. The protein localises to the growth cone. It localises to the neuron projection. The protein resides in the midbody. Its subcellular location is the golgi apparatus. Component of the exocyst complex involved in the docking of exocytic vesicles with fusion sites on the plasma membrane. This Rattus norvegicus (Rat) protein is Exocyst complex component 3 (Exoc3).